We begin with the raw amino-acid sequence, 317 residues long: Melanocyte-stimulating hormone receptor (317 aa).

The Extracellular segment spans residues 1-37 (MPVQGSQRRLLGSLNSTPTATPHLGLAANQTGARCLE). Asparagine 29 is a glycosylation site (N-linked (GlcNAc...) asparagine). The chain crosses the membrane as a helical span at residues 38-63 (MSIPDGLFLSLGLVSLVENVLVVTAI). At 64–72 (AKNRNLHSP) the chain is on the cytoplasmic side. A helical membrane pass occupies residues 73–93 (MYCFICCLALSDLLVSGSNML). At 94–118 (ETAVTLLLEAGALAARAAVVQQLDN) the chain is on the extracellular side. Residues 119 to 140 (VIDVITCSSMLSSLCFLGAIAV) traverse the membrane as a helical segment. Residues 141–163 (DRYISIFYALRYHSIVTLPRARR) are Cytoplasmic-facing. The helical transmembrane segment at 164–183 (AIAAIWVASVLCSTLFIAYY) threads the bilayer. Over 184–191 (DHAAVLLC) the chain is Extracellular. Residues 192-211 (LVVFFLAMLVLMAVLYVHML) traverse the membrane as a helical segment. Over 212-240 (ARACQHAQGIARLHKRQRLAHQGFGLKGA) the chain is Cytoplasmic. A helical membrane pass occupies residues 241–266 (ATLTILLGIFFLCWGPFFLHLTLIVL). The Extracellular portion of the chain corresponds to 267 to 279 (CPQHPTCSCIFKN). A helical membrane pass occupies residues 280–300 (FNLFLTLIICNAIIDPLIYAF). The Cytoplasmic segment spans residues 301–317 (RSQELRRTLKEVLLCSW). Cysteine 315 carries S-palmitoyl cysteine lipidation.

The protein belongs to the G-protein coupled receptor 1 family. As to quaternary structure, interacts with MGRN1, but does not undergo MGRN1-mediated ubiquitination; this interaction competes with GNAS-binding and thus inhibits agonist-induced cAMP production. Interacts with OPN3; the interaction results in a decrease in MC1R-mediated cAMP signaling and ultimately a decrease in melanin production in melanocytes.

It is found in the cell membrane. Its function is as follows. Receptor for MSH (alpha, beta and gamma) and ACTH. The activity of this receptor is mediated by G proteins which activate adenylate cyclase. Mediates melanogenesis, the production of eumelanin (black/brown) and phaeomelanin (red/yellow), via regulation of cAMP signaling in melanocytes. The sequence is that of Melanocyte-stimulating hormone receptor (MC1R) from Macaca nemestrina (Pig-tailed macaque).